We begin with the raw amino-acid sequence, 152 residues long: Flagellar assembly factor FliW (152 aa).

Belongs to the FliW family. As to quaternary structure, interacts with translational regulator CsrA and flagellin(s).

It localises to the cytoplasm. In terms of biological role, acts as an anti-CsrA protein, binds CsrA and prevents it from repressing translation of its target genes, one of which is flagellin. Binds to flagellin and participates in the assembly of the flagellum. The protein is Flagellar assembly factor FliW of Desulfitobacterium hafniense (strain Y51).